The following is a 290-amino-acid chain: Pyridoxal kinase PdxY (290 aa).

Ser14 contributes to the substrate binding site. Residues Asp116 and Glu153 each contribute to the ATP site. Asp226 contributes to the substrate binding site.

Belongs to the pyridoxine kinase family. PdxY subfamily. In terms of assembly, homodimer. Mg(2+) serves as cofactor.

It carries out the reaction pyridoxal + ATP = pyridoxal 5'-phosphate + ADP + H(+). It participates in cofactor metabolism; pyridoxal 5'-phosphate salvage; pyridoxal 5'-phosphate from pyridoxal: step 1/1. Functionally, pyridoxal kinase involved in the salvage pathway of pyridoxal 5'-phosphate (PLP). Catalyzes the phosphorylation of pyridoxal to PLP. The polypeptide is Pyridoxal kinase PdxY (Rubrobacter xylanophilus (strain DSM 9941 / JCM 11954 / NBRC 16129 / PRD-1)).